The chain runs to 491 residues: Subtilase-type proteinase RRT12 (491 aa).

The N-terminal stretch at 1 to 17 (MKPQCILISLLVNLAYA) is a signal peptide. 4 N-linked (GlcNAc...) asparagine glycosylation sites follow: asparagine 38, asparagine 64, asparagine 106, and asparagine 121. Residues 142-442 (PFDVGDKDRY…FPRLNIEAIA (301 aa)) enclose the Peptidase S8 domain. Catalysis depends on charge relay system residues aspartate 174 and histidine 205. Residues asparagine 268 and asparagine 356 are each glycosylated (N-linked (GlcNAc...) asparagine). Serine 365 serves as the catalytic Charge relay system. A glycan (N-linked (GlcNAc...) asparagine) is linked at asparagine 449.

The protein belongs to the peptidase S8 family. N-glycosylated.

Its subcellular location is the spore wall. In terms of biological role, subtilisin-related protease involved in the formation of a protective dityrosine layer required for spore wall assembly. Identified in a screen for mutants with increased levels of rDNA transcription. The polypeptide is Subtilase-type proteinase RRT12 (RRT12) (Saccharomyces cerevisiae (strain ATCC 204508 / S288c) (Baker's yeast)).